A 319-amino-acid chain; its full sequence is Malate dehydrogenase (319 aa).

NAD(+)-binding positions include 11–16 (GAGNVG) and D36. Residues R85 and R91 each contribute to the substrate site. Residues N98 and 121 to 123 (VSN) contribute to the NAD(+) site. 2 residues coordinate substrate: N123 and R154. H178 serves as the catalytic Proton acceptor.

The protein belongs to the LDH/MDH superfamily. MDH type 3 family.

The catalysed reaction is (S)-malate + NAD(+) = oxaloacetate + NADH + H(+). Catalyzes the reversible oxidation of malate to oxaloacetate. The sequence is that of Malate dehydrogenase from Sulfurimonas denitrificans (strain ATCC 33889 / DSM 1251) (Thiomicrospira denitrificans (strain ATCC 33889 / DSM 1251)).